The primary structure comprises 317 residues: Probable porphobilinogen deaminase (317 aa).

Cys-234 is subject to S-(dipyrrolylmethanemethyl)cysteine.

Belongs to the HMBS family. It depends on dipyrromethane as a cofactor.

The enzyme catalyses 4 porphobilinogen + H2O = hydroxymethylbilane + 4 NH4(+). It functions in the pathway porphyrin-containing compound metabolism; protoporphyrin-IX biosynthesis; coproporphyrinogen-III from 5-aminolevulinate: step 2/4. In terms of biological role, tetrapolymerization of the monopyrrole PBG into the hydroxymethylbilane pre-uroporphyrinogen in several discrete steps. The chain is Probable porphobilinogen deaminase from Methanosarcina acetivorans (strain ATCC 35395 / DSM 2834 / JCM 12185 / C2A).